Reading from the N-terminus, the 48-residue chain is DNA-directed RNA polymerase subunit Rpo12 (48 aa).

Positions 9, 26, and 29 each coordinate Zn(2+).

This sequence belongs to the archaeal Rpo12/eukaryotic RPC10 RNA polymerase subunit family. As to quaternary structure, part of the RNA polymerase complex. Zn(2+) serves as cofactor.

It localises to the cytoplasm. The enzyme catalyses RNA(n) + a ribonucleoside 5'-triphosphate = RNA(n+1) + diphosphate. In terms of biological role, DNA-dependent RNA polymerase (RNAP) catalyzes the transcription of DNA into RNA using the four ribonucleoside triphosphates as substrates. The protein is DNA-directed RNA polymerase subunit Rpo12 of Saccharolobus islandicus (strain Y.N.15.51 / Yellowstone #2) (Sulfolobus islandicus).